The following is a 169-amino-acid chain: NADH-quinone oxidoreductase subunit B (169 aa).

4 residues coordinate [4Fe-4S] cluster: cysteine 42, cysteine 43, cysteine 107, and cysteine 136.

The protein belongs to the complex I 20 kDa subunit family. In terms of assembly, NDH-1 is composed of 14 different subunits. Subunits NuoB, C, D, E, F, and G constitute the peripheral sector of the complex. [4Fe-4S] cluster is required as a cofactor.

It localises to the cell inner membrane. The enzyme catalyses a quinone + NADH + 5 H(+)(in) = a quinol + NAD(+) + 4 H(+)(out). Functionally, NDH-1 shuttles electrons from NADH, via FMN and iron-sulfur (Fe-S) centers, to quinones in the respiratory chain. The immediate electron acceptor for the enzyme in this species is believed to be ubiquinone. Couples the redox reaction to proton translocation (for every two electrons transferred, four hydrogen ions are translocated across the cytoplasmic membrane), and thus conserves the redox energy in a proton gradient. This Sulfurimonas denitrificans (strain ATCC 33889 / DSM 1251) (Thiomicrospira denitrificans (strain ATCC 33889 / DSM 1251)) protein is NADH-quinone oxidoreductase subunit B.